We begin with the raw amino-acid sequence, 492 residues long: N-succinylglutamate 5-semialdehyde dehydrogenase (492 aa).

220-225 is an NAD(+) binding site; it reads GRANTG. Active-site residues include Glu243 and Cys277.

It belongs to the aldehyde dehydrogenase family. AstD subfamily.

It carries out the reaction N-succinyl-L-glutamate 5-semialdehyde + NAD(+) + H2O = N-succinyl-L-glutamate + NADH + 2 H(+). The protein operates within amino-acid degradation; L-arginine degradation via AST pathway; L-glutamate and succinate from L-arginine: step 4/5. Functionally, catalyzes the NAD-dependent reduction of succinylglutamate semialdehyde into succinylglutamate. The chain is N-succinylglutamate 5-semialdehyde dehydrogenase from Shigella boydii serotype 4 (strain Sb227).